We begin with the raw amino-acid sequence, 132 residues long: Small ribosomal subunit protein uS8 (132 aa).

Belongs to the universal ribosomal protein uS8 family. In terms of assembly, part of the 30S ribosomal subunit. Contacts proteins S5 and S12.

Its function is as follows. One of the primary rRNA binding proteins, it binds directly to 16S rRNA central domain where it helps coordinate assembly of the platform of the 30S subunit. This is Small ribosomal subunit protein uS8 from Corynebacterium diphtheriae (strain ATCC 700971 / NCTC 13129 / Biotype gravis).